We begin with the raw amino-acid sequence, 521 residues long: MNEPISNSSKKTENTTQGVRKIRTMIEGFDEITHGGLPIGRTTLVSGTSGTGKTLLAVQFLYHGIKYFDYPGLFVTFEESPTDIIQNAYSFGWDLQEIVDEGKLFILDASPDPDGQEVVGSFDLSALIERIQYAINKYKAQLVSIDSVTAVFQQYDAASVVRREIFRLVARLKLLGVTSIMTTERIEEYGPIARYGVEEFVSDNVVVLRNVLEGERRRRTAEILKLRGTTHMKGEYPFTITNDGINIFPLGAMRLTQRSSNARISSGVKTLDEMCGGGFFKDSIILATGATGTGKTLLVSKFLEEGCRQGERAILFAYEESRAQLSRNAFSWGIDFEEMERKGLLKLLCSYPESAGLEDHLQIIKSEISEFKPSRIAIDSLSALARGVTNNAFRQFVIGVTGYAKQEEITGFFTNTTDQFMGAHSITESHISTITDTIIMLQYVEIRGEMSRAINVFKMRGSWHDKGIREYSINESGPTIQDSFRNYERIISGSPTRITVDEKNELSRIVRGVKDKTLDEE.

2 KaiC domains span residues 1–248 and 262–521; these read MNEP…INIF and ARIS…LDEE. ATP contacts are provided by Gly50, Thr51, Gly52, Lys53, Thr54, Leu55, Ser90, Lys225, Leu226, Arg227, Thr229, His231, Thr241, Thr291, Gly292, Thr293, Gly294, Lys295, Thr296, and Leu297. Mg(2+) is bound at residue Thr54. A Mg(2+)-binding site is contributed by Thr296. Glu319 is a binding site for Mg(2+). Position 332 (Trp332) interacts with ATP. Ser432 is modified (phosphoserine; by autocatalysis). Phosphothreonine; by autocatalysis is present on Thr433. Arg452, Lys458, Met459, Arg460, Ser462, His464, and Lys466 together coordinate ATP.

The protein belongs to the KaiC family. Homohexamer; hexamerization is dependent on ATP-binding. The KaiABC complex composition changes during the circadian cycle to control KaiC phosphorylation. Complexes KaiC(6), KaiA(2-4):KaiC(6), KaiB(6):KaiC(6) and KaiC(6):KaiB(6):KaiA(12) are among the most important forms, many form cooperatively. KaiC interacts with SasA, activating its autokinase function and leading to RpaA activation. The cofactor is Mg(2+). In terms of processing, phosphorylated on serine and threonine residues by autocatalysis. Has a 4 step phosphorylation cycle; the autokinase acts first on Thr-433, then Ser-432. When Ser-432 is modified KaiC switches to an autophosphatase mode, acting first on phospho-Thr-433 then phospho-Ser-432.

It carries out the reaction L-seryl-[protein] + ATP = O-phospho-L-seryl-[protein] + ADP + H(+). It catalyses the reaction L-threonyl-[protein] + ATP = O-phospho-L-threonyl-[protein] + ADP + H(+). The catalysed reaction is ATP + H2O = ADP + phosphate + H(+). Its activity is regulated as follows. The interaction with KaiA enhances its phosphorylation status, while the interaction with KaiB decreases it. Its function is as follows. Central component of the KaiABC oscillator complex, which constitutes the main circadian regulator in cyanobacteria. Complex composition changes during the circadian cycle to control KaiC phosphorylation. KaiA stimulates KaiC autophosphorylation, while KaiB sequesters KaiA, leading to KaiC autodephosphorylation. Clock output pathways impact the RpaA transcriptional regulator. KaiC enhances the autophosphorylation activity of SasA, which then transfers its phosphate group to RpaA to activate it. KaiB and KaiC together enhance the phospho-RpaA dephosphatase activity of CikA. Functionally, has a weak, temperature-independent ATPase activity; ATPase activity defines the circadian period. The phosphorylation state of KaiC modulates its ATPase activity and effects KaiB binding. The chain is Circadian clock oscillator protein KaiC from Rippkaea orientalis (strain PCC 8801 / RF-1) (Cyanothece sp. (strain PCC 8801)).